Consider the following 419-residue polypeptide: E3 ubiquitin-protein ligase RNFT1 (419 aa).

Residues 1–120 (MKLRAQFDRG…SGESDLESGE (120 aa)) form a disordered region. 2 stretches are compositionally biased toward polar residues: residues 31–44 (EPSSREGNGLSLTL) and 72–82 (GSSSGSTNGRG). A compositionally biased stretch (basic residues) spans 84-102 (TSRRMRTASHSHSHTHGHG). Transmembrane regions (helical) follow at residues 141-161 (FIVILCAKLVIQHALGLAVAV), 187-207 (LHCAWLLLFLTSSSLLVFYTF), 217-237 (FFANATIDYHNFWEVLWSVGV), 240-260 (FILKFIFMGFKCLILLVPCPL), 270-290 (YMLIEEVGQLYQVIAPVPLWF), and 303-323 (VGLTLGILLALLYLIMKLLAL). A required for ubiquitin ligase activity and for protection against ER stress-induced cell death region spans residues 352-403 (IREAGDICPICQADFKQPRVLVCQHIFCEECIAQWLNQERTCPLCRTVITDK). The RING-type zinc-finger motif lies at 359–397 (CPICQADFKQPRVLVCQHIFCEECIAQWLNQERTCPLCR).

It localises to the endoplasmic reticulum membrane. It catalyses the reaction S-ubiquitinyl-[E2 ubiquitin-conjugating enzyme]-L-cysteine + [acceptor protein]-L-lysine = [E2 ubiquitin-conjugating enzyme]-L-cysteine + N(6)-ubiquitinyl-[acceptor protein]-L-lysine.. Its pathway is protein modification; protein ubiquitination. In terms of biological role, E3 ubiquitin-protein ligase that acts in the endoplasmic reticulum (ER)-associated degradation (ERAD) pathway, which targets misfolded proteins that accumulate in the endoplasmic reticulum (ER) for ubiquitination and subsequent proteasome-mediated degradation. Protects cells from ER stress-induced apoptosis. The protein is E3 ubiquitin-protein ligase RNFT1 (rnft1) of Danio rerio (Zebrafish).